The primary structure comprises 478 residues: Aspartyl/glutamyl-tRNA(Asn/Gln) amidotransferase subunit B (478 aa).

Belongs to the GatB/GatE family. GatB subfamily. As to quaternary structure, heterotrimer of A, B and C subunits.

The catalysed reaction is L-glutamyl-tRNA(Gln) + L-glutamine + ATP + H2O = L-glutaminyl-tRNA(Gln) + L-glutamate + ADP + phosphate + H(+). It carries out the reaction L-aspartyl-tRNA(Asn) + L-glutamine + ATP + H2O = L-asparaginyl-tRNA(Asn) + L-glutamate + ADP + phosphate + 2 H(+). In terms of biological role, allows the formation of correctly charged Asn-tRNA(Asn) or Gln-tRNA(Gln) through the transamidation of misacylated Asp-tRNA(Asn) or Glu-tRNA(Gln) in organisms which lack either or both of asparaginyl-tRNA or glutaminyl-tRNA synthetases. The reaction takes place in the presence of glutamine and ATP through an activated phospho-Asp-tRNA(Asn) or phospho-Glu-tRNA(Gln). This is Aspartyl/glutamyl-tRNA(Asn/Gln) amidotransferase subunit B from Syntrophotalea carbinolica (strain DSM 2380 / NBRC 103641 / GraBd1) (Pelobacter carbinolicus).